We begin with the raw amino-acid sequence, 286 residues long: ATSNSKPTQVLLATFLTFFFLLLNNVNSSDELSFTINNFVPNEADLLFQGEASVSSTGVLQLTRVENGQPQQYSVGRALYAAPVRIWDNTTGSVASFSTSFTFVVKAPNPTITSDGLAFFLAPPDSQIPSGRVSKYLGLFNNSNSDSSNQIVAVEFDTYFGHSYDPWDPNYRHIGIDVNGIESIKTVQWDWINGGVAFATITYLAPNKTLIASLVYPSNQTSFIVAASVDLKEILPEWVRVGFSAATGYPTQVETHDVLSWSFTSTLEANSDAATENNVHIARYTA.

Residues 1–28 (ATSNSKPTQVLLATFLTFFFLLLNNVNS) form the signal peptide. Residue tyrosine 73 participates in N-acetyl-alpha-neuraminyl-(2-&gt;3)-beta-D-galactosyl-(1-&gt;4)-beta-D-glucose binding. N-linked (GlcNAc...) asparagine glycosylation is present at asparagine 89. 2 residues coordinate N-acetyl-alpha-neuraminyl-(2-&gt;3)-beta-D-galactosyl-(1-&gt;4)-beta-D-glucose: aspartate 115 and lysine 135. N-linked (GlcNAc...) asparagine glycosylation occurs at asparagine 141. Residues glutamate 155 and aspartate 157 each contribute to the Mn(2+) site. Residues aspartate 157, tyrosine 159, aspartate 165, and aspartate 168 each coordinate Ca(2+). 2 residues coordinate N-acetyl-alpha-neuraminyl-(2-&gt;3)-beta-D-galactosyl-(1-&gt;4)-beta-D-glucose: tyrosine 159 and aspartate 165. Residues aspartate 168 and histidine 173 each contribute to the Mn(2+) site. 2 N-linked (GlcNAc...) asparagine glycosylation sites follow: asparagine 207 and asparagine 219. A propeptide spans 278 to 286 (NVHIARYTA) (removed in mature form).

The protein belongs to the leguminous lectin family.

Its function is as follows. Sialic acid-binding lectin specifically recognizing the trisaccharide sequence Neu5Ac/Gc-alpha-2,3-Gal-beta-1,4-GlcNAc/Glc. The polypeptide is Bark leucoagglutinin (Maackia amurensis (Amur maackia)).